Reading from the N-terminus, the 284-residue chain is Probable ADP-ribose 1''-phosphate phosphatase YML087W (284 aa).

Substrate contacts are provided by aspartate 23, glutamine 55, asparagine 80, and aspartate 90. One can recognise a Macro domain in the interval 34–230; it reads ESIPHAYIQN…HISKELKNVL (197 aa). Residues asparagine 80 and aspartate 90 contribute to the active site. A disulfide bond links cysteine 128 and cysteine 136. Residue histidine 145 is part of the active site. Residues threonine 148 and threonine 195 each contribute to the substrate site.

As to quaternary structure, homodimer.

The enzyme catalyses ADP-alpha-D-ribose 1''-phosphate + H2O = ADP-D-ribose + phosphate. Highly specific phosphatase involved in the metabolism of ADP-ribose 1''-phosphate (Appr1p) which is produced as a consequence of tRNA splicing. + phosphate. The protein is Probable ADP-ribose 1''-phosphate phosphatase YML087W of Saccharomyces cerevisiae (strain ATCC 204508 / S288c) (Baker's yeast).